The chain runs to 142 residues: Large ribosomal subunit protein uL11 (142 aa).

It belongs to the universal ribosomal protein uL11 family. Part of the ribosomal stalk of the 50S ribosomal subunit. Interacts with L10 and the large rRNA to form the base of the stalk. L10 forms an elongated spine to which L12 dimers bind in a sequential fashion forming a multimeric L10(L12)X complex. In terms of processing, one or more lysine residues are methylated.

Functionally, forms part of the ribosomal stalk which helps the ribosome interact with GTP-bound translation factors. The protein is Large ribosomal subunit protein uL11 of Mycolicibacterium gilvum (strain PYR-GCK) (Mycobacterium gilvum (strain PYR-GCK)).